The following is a 614-amino-acid chain: uncharacterized protein (614 aa).

Residues tyrosine 23–proline 68 are disordered. Over residues lysine 49–proline 68 the composition is skewed to polar residues.

It to C.trachomatis CT875.

This is an uncharacterized protein from Chlamydia muridarum (strain MoPn / Nigg).